The chain runs to 187 residues: UPF0301 protein YqgE (187 aa).

It belongs to the UPF0301 (AlgH) family.

This chain is UPF0301 protein YqgE, found in Salmonella agona (strain SL483).